Here is a 305-residue protein sequence, read N- to C-terminus: MELIFLGTSAGVPTRTRNVTAILLNLQHPTQSGLWLFDCGEGTQHQLLHTAFNPGKLDKIFISHLHGDHLFGLPGLLCSRSMSGIVQPLTIYGPQGIREFVETALRISGSWTDYPLEIVEIGAGEIFDDGLRKVTAYPLEHPLECYGYRIEEHDKPGALNAQALKAAGVPPGPLFQELKAGKTIMLDDGRQINGADYLAAPVPGKALAIFGDTGPCDAALELAKGVDVMVHEATLDMAMEAKANSRGHSSTRQAAALAREAGVGKLIITHVSSRYDDKGCQHLLRECRSIFPATELANDFAVFNV.

7 residues coordinate Zn(2+): His64, His66, Asp68, His69, His141, Asp212, and His270. The Proton acceptor role is filled by Asp68.

This sequence belongs to the RNase Z family. RNase BN subfamily. In terms of assembly, homodimer. Zn(2+) is required as a cofactor.

Its function is as follows. Zinc phosphodiesterase, which has both exoribonuclease and endoribonuclease activities. The sequence is that of Ribonuclease BN from Escherichia coli O6:K15:H31 (strain 536 / UPEC).